The primary structure comprises 245 residues: Transcriptional regulatory protein YpdB (245 aa).

In terms of domain architecture, Response regulatory spans 2–116; the sequence is KVIIVEDEFL…RITGMLQKLE (115 aa). At Asp53 the chain carries 4-aspartylphosphate. Positions 140 to 245 constitute an HTH LytTR-type domain; it reads INLVKDERII…VKEFRQLMHL (106 aa).

Phosphorylated by YpdA.

It localises to the cytoplasm. Functionally, member of the two-component regulatory system YpdA/YpdB. YpdB regulates expression of yhjX by binding to its promoter region. The polypeptide is Transcriptional regulatory protein YpdB (ypdB) (Escherichia coli O6:H1 (strain CFT073 / ATCC 700928 / UPEC)).